The following is a 283-amino-acid chain: Elongation factor Ts (283 aa).

An involved in Mg(2+) ion dislocation from EF-Tu region spans residues 79–82; sequence TDFV.

It belongs to the EF-Ts family.

The protein resides in the cytoplasm. Associates with the EF-Tu.GDP complex and induces the exchange of GDP to GTP. It remains bound to the aminoacyl-tRNA.EF-Tu.GTP complex up to the GTP hydrolysis stage on the ribosome. This is Elongation factor Ts from Shewanella denitrificans (strain OS217 / ATCC BAA-1090 / DSM 15013).